Reading from the N-terminus, the 221-residue chain is Translation initiation factor 6 (221 aa).

It belongs to the eIF-6 family.

Functionally, binds to the 50S ribosomal subunit and prevents its association with the 30S ribosomal subunit to form the 70S initiation complex. The sequence is that of Translation initiation factor 6 from Nitrosopumilus maritimus (strain SCM1).